A 419-amino-acid polypeptide reads, in one-letter code: Putative nickel insertion protein (419 aa).

Positions 69–90 (HDPSNHPSQNTHHHHHHHTRHL) are disordered. The segment covering 79–88 (THHHHHHHTR) has biased composition (basic residues).

It belongs to the LarC family.

In Rippkaea orientalis (strain PCC 8801 / RF-1) (Cyanothece sp. (strain PCC 8801)), this protein is Putative nickel insertion protein.